A 467-amino-acid polypeptide reads, in one-letter code: ATP synthase subunit beta (467 aa).

ATP is bound at residue 152–159; sequence GGAGVGKT.

It belongs to the ATPase alpha/beta chains family. F-type ATPases have 2 components, CF(1) - the catalytic core - and CF(0) - the membrane proton channel. CF(1) has five subunits: alpha(3), beta(3), gamma(1), delta(1), epsilon(1). CF(0) has three main subunits: a(1), b(2) and c(9-12). The alpha and beta chains form an alternating ring which encloses part of the gamma chain. CF(1) is attached to CF(0) by a central stalk formed by the gamma and epsilon chains, while a peripheral stalk is formed by the delta and b chains.

It localises to the cell membrane. It catalyses the reaction ATP + H2O + 4 H(+)(in) = ADP + phosphate + 5 H(+)(out). Functionally, produces ATP from ADP in the presence of a proton gradient across the membrane. The catalytic sites are hosted primarily by the beta subunits. The protein is ATP synthase subunit beta of Caldicellulosiruptor bescii (strain ATCC BAA-1888 / DSM 6725 / KCTC 15123 / Z-1320) (Anaerocellum thermophilum).